We begin with the raw amino-acid sequence, 1779 residues long: 5-methyl-1-naphthoate synthase (1779 aa).

A Ketosynthase family 3 (KS3) domain is found at 10 to 433; that stretch reads VEPLAVIGMS…GSIAHAVLQQ (424 aa). Active-site for beta-ketoacyl synthase activity residues include C181, H316, and H356. The interval 902–1027 is N-terminal hotdog fold; that stretch reads HTLIGARTTV…ATVVHEPEVG (126 aa). A PKS/mFAS DH domain is found at 902–1180; sequence HTLIGARTTV…YVKVQDIGSG (279 aa). The C-terminal hotdog fold stretch occupies residues 1042-1180; that stretch reads PVSWTWAKVD…YVKVQDIGSG (139 aa). A Carrier domain is found at 1664-1742; the sequence is GELPELVLKV…ALAEFLAAEV (79 aa). The residue at position 1702 (S1702) is an O-(pantetheine 4'-phosphoryl)serine. The tract at residues 1746–1771 is disordered; it reads TADAEETDPVAGLPAPQQGSGTAEQL.

The catalysed reaction is 5 malonyl-CoA + acetyl-CoA + 3 NADPH + 7 H(+) = 5-methyl-1-naphthoate + 5 CO2 + 3 NADP(+) + 6 CoA + 4 H2O. It functions in the pathway antibiotic biosynthesis. Functionally, polyketide synthase that catalyzes the biosynthesis of the bicyclic aromatic compound 5-methyl-1-naphthoate in the biosynthesis of the antitumor antibiotic azinomycin B. The protein is 5-methyl-1-naphthoate synthase of Streptomyces sahachiroi.